The primary structure comprises 235 residues: Large ribosomal subunit protein uL1 (235 aa).

Belongs to the universal ribosomal protein uL1 family. As to quaternary structure, part of the 50S ribosomal subunit.

Its function is as follows. Binds directly to 23S rRNA. The L1 stalk is quite mobile in the ribosome, and is involved in E site tRNA release. Protein L1 is also a translational repressor protein, it controls the translation of the L11 operon by binding to its mRNA. This Mycolicibacterium vanbaalenii (strain DSM 7251 / JCM 13017 / BCRC 16820 / KCTC 9966 / NRRL B-24157 / PYR-1) (Mycobacterium vanbaalenii) protein is Large ribosomal subunit protein uL1.